A 210-amino-acid chain; its full sequence is MSEKDQSVNNTEEDFNVETEDNQNDTNIENSVSNTDNSEANASDSENNSEESIKDEESESQDTKIKELEKLANDNEEKYLRLYAEFENYKRRIQKENQINATYKAQGVLTDILPSIDNIERALQIEGDDESFKSLQKGVQMVHESLLRALKDNGLEEILAEGKEFDPNLHQAVVQDDNPDFKSGEVTQELQKGYKLKDRVLRPSMVKVNQ.

The disordered stretch occupies residues 1 to 71; sequence MSEKDQSVNN…DTKIKELEKL (71 aa). The span at 11 to 23 shows a compositional bias: acidic residues; that stretch reads TEEDFNVETEDNQ. Residues 24–35 show a composition bias toward polar residues; that stretch reads NDTNIENSVSNT. Positions 36–46 are enriched in low complexity; the sequence is DNSEANASDSE. Residues 47 to 60 show a composition bias toward acidic residues; it reads NNSEESIKDEESES. Basic and acidic residues predominate over residues 61–71; that stretch reads QDTKIKELEKL.

The protein belongs to the GrpE family. As to quaternary structure, homodimer.

It localises to the cytoplasm. Functionally, participates actively in the response to hyperosmotic and heat shock by preventing the aggregation of stress-denatured proteins, in association with DnaK and GrpE. It is the nucleotide exchange factor for DnaK and may function as a thermosensor. Unfolded proteins bind initially to DnaJ; upon interaction with the DnaJ-bound protein, DnaK hydrolyzes its bound ATP, resulting in the formation of a stable complex. GrpE releases ADP from DnaK; ATP binding to DnaK triggers the release of the substrate protein, thus completing the reaction cycle. Several rounds of ATP-dependent interactions between DnaJ, DnaK and GrpE are required for fully efficient folding. The sequence is that of Protein GrpE from Staphylococcus epidermidis (strain ATCC 35984 / DSM 28319 / BCRC 17069 / CCUG 31568 / BM 3577 / RP62A).